Consider the following 64-residue polypeptide: Large ribosomal subunit protein bL35 (64 aa).

This sequence belongs to the bacterial ribosomal protein bL35 family.

This chain is Large ribosomal subunit protein bL35, found in Desulforamulus reducens (strain ATCC BAA-1160 / DSM 100696 / MI-1) (Desulfotomaculum reducens).